A 699-amino-acid polypeptide reads, in one-letter code: Lutropin-choriogonadotropic hormone receptor (699 aa).

The N-terminal stretch at 1 to 26 is a signal peptide; that stretch reads MKQRFSALQLLKLLLLLQPPLPRALR. One can recognise an LRRNT domain in the interval 27–66; the sequence is EALCPEPCNCVPDGALRCPGPTAGLTRLSLAYLPVKVIPS. The Extracellular segment spans residues 27-363; the sequence is EALCPEPCNC…EDIMGYDFLR (337 aa). 3 LRR repeats span residues 96–115, 124–145, and 149–171; these read NLLN…RYIE, RLKY…TKVF, and SNFI…AFQG. The N-linked (GlcNAc...) asparagine glycan is linked to N99. N-linked (GlcNAc...) asparagine glycans are attached at residues N174 and N195. 3 LRR repeats span residues 175-196, 198-220, and 223-244; these read ESVT…AFNG, TLTS…AFRG, and GPKT…GLES. N291, N299, and N313 each carry an N-linked (GlcNAc...) asparagine glycan. At Y331 the chain carries Sulfotyrosine. Residues 364-385 form a helical membrane-spanning segment; the sequence is VLIWLINILAIMGNMTVLFVLL. Residues 386–395 are Cytoplasmic-facing; sequence TSRYKLTVPR. The helical transmembrane segment at 396–416 threads the bilayer; sequence FLMCNLSFADFCMGLYLLLIA. Over 417–439 the chain is Extracellular; sequence SVDSQTKGQYYNHAIDWQTGSGC. The cysteines at positions 439 and 514 are disulfide-linked. The helical transmembrane segment at 440–462 threads the bilayer; the sequence is STAGFFTVFASELSVYTLTVITL. Residues 463 to 482 are Cytoplasmic-facing; the sequence is ERWHTITYAIHLDQKLRLRH. A helical transmembrane segment spans residues 483–505; sequence AILIMLGGWLFSSLIAMLPLVGV. Residues 506–525 are Extracellular-facing; that stretch reads SNYMKVSICFPMDVETTLSQ. The chain crosses the membrane as a helical span at residues 526 to 549; the sequence is VYILTILILNVVAFFIICACYIKI. Over 550-570 the chain is Cytoplasmic; that stretch reads YFAVRNPELMATNKDTKIAKK. A helical membrane pass occupies residues 571–594; sequence MAILIFTDFTCMAPISFFAISAAF. At 595–605 the chain is on the extracellular side; it reads KVPLITVTNSK. Residues 606–627 form a helical membrane-spanning segment; it reads VLLVLFYPINSCANPFLYAIFT. The Cytoplasmic portion of the chain corresponds to 628–699; the sequence is KTFQRDFFLL…LLDKTRYTEC (72 aa). Residues C643 and C644 are each lipidated (S-palmitoyl cysteine).

It belongs to the G-protein coupled receptor 1 family. FSH/LSH/TSH subfamily. Post-translationally, sulfated. Gonadal and thyroid cells.

The protein localises to the cell membrane. In terms of biological role, receptor for lutropin-choriogonadotropic hormone. The activity of this receptor is mediated by G proteins which activate adenylate cyclase. The chain is Lutropin-choriogonadotropic hormone receptor (LHCGR) from Homo sapiens (Human).